The primary structure comprises 256 residues: Small ribosomal subunit protein uS2 (256 aa).

It belongs to the universal ribosomal protein uS2 family.

The sequence is that of Small ribosomal subunit protein uS2 from Streptococcus agalactiae serotype Ia (strain ATCC 27591 / A909 / CDC SS700).